We begin with the raw amino-acid sequence, 215 residues long: Cytochrome b6 (215 aa).

Residues I32 to F52 traverse the membrane as a helical segment. C35 lines the heme c pocket. H86 and H100 together coordinate heme b. The next 3 helical transmembrane spans lie at A90–F110, L116–Y136, and L186–I206. Heme b contacts are provided by H187 and H202.

It belongs to the cytochrome b family. PetB subfamily. As to quaternary structure, the 4 large subunits of the cytochrome b6-f complex are cytochrome b6, subunit IV (17 kDa polypeptide, PetD), cytochrome f and the Rieske protein, while the 4 small subunits are PetG, PetL, PetM and PetN. The complex functions as a dimer. The cofactor is heme b. Requires heme c as cofactor.

The protein localises to the plastid. The protein resides in the chloroplast thylakoid membrane. Component of the cytochrome b6-f complex, which mediates electron transfer between photosystem II (PSII) and photosystem I (PSI), cyclic electron flow around PSI, and state transitions. This chain is Cytochrome b6, found in Zygnema circumcarinatum (Green alga).